The following is a 72-amino-acid chain: Protein RALF-like 12 (72 aa).

The first 17 residues, 1-17, serve as a signal peptide directing secretion; the sequence is MKAWVIGLLVICAVVIA. Intrachain disulfides connect Cys-34–Cys-43 and Cys-63–Cys-69. The interval 37 to 60 is disordered; that stretch reads PNPPPGCNPPGTEQKNPTPVNEYS.

Belongs to the plant rapid alkalinization factor (RALF) family.

The protein resides in the secreted. Functionally, cell signaling peptide that may regulate plant stress, growth, and development. Mediates a rapid alkalinization of extracellular space by mediating a transient increase in the cytoplasmic Ca(2+) concentration leading to a calcium-dependent signaling events through a cell surface receptor and a concomitant activation of some intracellular mitogen-activated protein kinases. This is Protein RALF-like 12 (RALFL12) from Arabidopsis thaliana (Mouse-ear cress).